A 496-amino-acid polypeptide reads, in one-letter code: Serine/threonine-protein kinase Sgk3 (496 aa).

The region spanning 12–124 is the PX domain; the sequence is SCPSVSIPSS…AFLQMDSPRH (113 aa). Positions 121-157 are disordered; it reads SPRHQSDPSEDEDERSTPKPHSTSRNINLGPTGNPHA. Residues serine 126 and serine 129 each carry the phosphoserine modification. Residues 139–151 are compositionally biased toward polar residues; sequence KPHSTSRNINLGP. The Protein kinase domain maps to 162-464; it reads FDFLKVIGKG…EETVPYSVCV (303 aa). ATP contacts are provided by residues 168–176 and lysine 191; that span reads IGKGSFGKV. The short motif at 195-205 is the Nuclear localization signal element; the sequence is KKIVLNRKEQK. The Proton acceptor role is filled by aspartate 286. Threonine 320 is subject to Phosphothreonine; by PDPK1. In terms of domain architecture, AGC-kinase C-terminal spans 420–496; the sequence is ESLSWTDLVQ…YAPPSEDLFL (77 aa). A Phosphoserine modification is found at serine 486.

The protein belongs to the protein kinase superfamily. AGC Ser/Thr protein kinase family. Interacts with GSK3B and FLII. Interacts with PDPK1 in a phosphorylation-dependent manner. Activated by phosphorylation on Ser-486 by an unknown kinase (may be mTORC2 but not confirmed), transforming it into a substrate for PDPK1 which then phosphorylates it on Thr-320.

It localises to the cytoplasmic vesicle. The protein localises to the early endosome. The protein resides in the recycling endosome. It catalyses the reaction L-seryl-[protein] + ATP = O-phospho-L-seryl-[protein] + ADP + H(+). The catalysed reaction is L-threonyl-[protein] + ATP = O-phospho-L-threonyl-[protein] + ADP + H(+). Its activity is regulated as follows. Two specific sites, one in the kinase domain (Thr-320) and the other in the C-terminal regulatory region (Ser-486), need to be phosphorylated for its full activation. In terms of biological role, serine/threonine-protein kinase which is involved in the regulation of a wide variety of ion channels, membrane transporters, cell growth, proliferation, survival and migration. Up-regulates Na(+) channels: SCNN1A/ENAC and SCN5A, K(+) channels: KCNA3/KV1.3, KCNE1, KCNQ1 and KCNH2/HERG, epithelial Ca(2+) channels: TRPV5 and TRPV6, chloride channel: BSND, creatine transporter: SLC6A8, Na(+)/dicarboxylate cotransporter: SLC13A2/NADC1, Na(+)-dependent phosphate cotransporter: SLC34A2/NAPI-2B, amino acid transporters: SLC1A5/ASCT2 and SLC6A19, glutamate transporters: SLC1A3/EAAT1, SLC1A6/EAAT4 and SLC1A7/EAAT5, glutamate receptors: GRIA1/GLUR1 and GRIK2/GLUR6, Na(+)/H(+) exchanger: SLC9A3/NHE3, and the Na(+)/K(+) ATPase. Plays a role in the regulation of renal tubular phosphate transport and bone density. Phosphorylates NEDD4L and GSK3B. Positively regulates ER transcription activity through phosphorylation of FLII. Negatively regulates the function of ITCH/AIP4 via its phosphorylation and thereby prevents CXCR4 from being efficiently sorted to lysosomes. The sequence is that of Serine/threonine-protein kinase Sgk3 (Sgk3) from Rattus norvegicus (Rat).